The chain runs to 432 residues: Glutamyl-tRNA reductase (432 aa).

Substrate contacts are provided by residues 49–52 (TCNR), Ser107, 112–114 (ETQ), and Gln118. Residue Cys50 is the Nucleophile of the active site. 186–191 (GAGEMG) is a binding site for NADP(+).

Belongs to the glutamyl-tRNA reductase family. Homodimer.

The catalysed reaction is (S)-4-amino-5-oxopentanoate + tRNA(Glu) + NADP(+) = L-glutamyl-tRNA(Glu) + NADPH + H(+). Its pathway is porphyrin-containing compound metabolism; protoporphyrin-IX biosynthesis; 5-aminolevulinate from L-glutamyl-tRNA(Glu): step 1/2. Its function is as follows. Catalyzes the NADPH-dependent reduction of glutamyl-tRNA(Glu) to glutamate 1-semialdehyde (GSA). The sequence is that of Glutamyl-tRNA reductase from Campylobacter jejuni subsp. jejuni serotype O:2 (strain ATCC 700819 / NCTC 11168).